Reading from the N-terminus, the 500-residue chain is NAD(P)H-quinone oxidoreductase subunit 2 B, chloroplastic (500 aa).

Helical transmembrane passes span 14-34 (SILP…IDLT), 41-61 (WLYF…LFQL), 78-98 (FNGI…PLSM), 116-136 (LTAT…IIFI), 166-186 (LLMG…LYGL), 211-231 (ISIV…LVPF), 242-262 (APTS…LALA), 277-297 (WHLI…FIAI), 305-325 (MLAY…IAGD), 335-355 (YMLF…LFGL), 376-396 (ASFL…AGFF), 409-429 (GLYL…YYYL), and 467-487 (IIIC…VIAI).

It belongs to the complex I subunit 2 family. In terms of assembly, NDH is composed of at least 16 different subunits, 5 of which are encoded in the nucleus.

It is found in the plastid. The protein resides in the chloroplast thylakoid membrane. The enzyme catalyses a plastoquinone + NADH + (n+1) H(+)(in) = a plastoquinol + NAD(+) + n H(+)(out). It catalyses the reaction a plastoquinone + NADPH + (n+1) H(+)(in) = a plastoquinol + NADP(+) + n H(+)(out). In terms of biological role, NDH shuttles electrons from NAD(P)H:plastoquinone, via FMN and iron-sulfur (Fe-S) centers, to quinones in the photosynthetic chain and possibly in a chloroplast respiratory chain. The immediate electron acceptor for the enzyme in this species is believed to be plastoquinone. Couples the redox reaction to proton translocation, and thus conserves the redox energy in a proton gradient. The sequence is that of NAD(P)H-quinone oxidoreductase subunit 2 B, chloroplastic from Anthoceros angustus (Hornwort).